We begin with the raw amino-acid sequence, 589 residues long: Probable cytochrome P450 49a1 (589 aa).

The interval 56 to 90 is disordered; it reads TGESSNPKKLNVSQQPVTSVATTRTTASSLPAETT. The span at 57-71 shows a compositional bias: polar residues; that stretch reads GESSNPKKLNVSQQP. Low complexity predominate over residues 72–84; that stretch reads VTSVATTRTTASS. Position 536 (Cys-536) interacts with heme.

This sequence belongs to the cytochrome P450 family. Heme is required as a cofactor.

It is found in the endoplasmic reticulum membrane. The protein resides in the microsome membrane. May be involved in the metabolism of insect hormones and in the breakdown of synthetic insecticides. In Drosophila melanogaster (Fruit fly), this protein is Probable cytochrome P450 49a1 (Cyp49a1).